Consider the following 277-residue polypeptide: Thymidylate synthase (277 aa).

R21 is a binding site for dUMP. Residue H51 coordinates (6R)-5,10-methylene-5,6,7,8-tetrahydrofolate. 139–140 (RR) contacts dUMP. The active-site Nucleophile is C159. Residues 179-182 (RSAD), N190, and 220-222 (HIY) each bind dUMP. Residue D182 coordinates (6R)-5,10-methylene-5,6,7,8-tetrahydrofolate. A276 is a (6R)-5,10-methylene-5,6,7,8-tetrahydrofolate binding site.

It belongs to the thymidylate synthase family. Bacterial-type ThyA subfamily. Homodimer.

It localises to the cytoplasm. The catalysed reaction is dUMP + (6R)-5,10-methylene-5,6,7,8-tetrahydrofolate = 7,8-dihydrofolate + dTMP. It functions in the pathway pyrimidine metabolism; dTTP biosynthesis. Its function is as follows. Catalyzes the reductive methylation of 2'-deoxyuridine-5'-monophosphate (dUMP) to 2'-deoxythymidine-5'-monophosphate (dTMP) while utilizing 5,10-methylenetetrahydrofolate (mTHF) as the methyl donor and reductant in the reaction, yielding dihydrofolate (DHF) as a by-product. This enzymatic reaction provides an intracellular de novo source of dTMP, an essential precursor for DNA biosynthesis. In Ruegeria sp. (strain TM1040) (Silicibacter sp.), this protein is Thymidylate synthase.